The chain runs to 1841 residues: Cell division control protein 12 (1841 aa).

Polar residues-rich tracts occupy residues 1–25 and 46–63; these read MRNSSKGQDPNFSYDSILSTPTPSA and SIESVSTLIQPNKSQSVT. Disordered stretches follow at residues 1-63, 78-134, and 152-181; these read MRNS…QSVT, NSHN…GPRL, and PPVHSRSFDPLPKPPVPSVPVSKTKRRTKH. The GBD/FH3 domain maps to 232-620; sequence TRPPSLDQLI…RILLNSKVSN (389 aa). Positions 674–715 form a coiled coil; it reads LGAEDLIAKLNKEVEDQKDVILSQKRTNETLKTEIDALQKSH. Residues 740-972 enclose the FH1 domain; sequence GSTNSKERII…VSPAVSNNIS (233 aa). One can recognise an FH2 domain in the interval 980–1391; it reads TGLTRRPTRR…QHRRLNLVNN (412 aa). The stretch at 1260–1290 forms a coiled coil; sequence TEAAKLNIEAIEQECSELIRGCQNLQIDCDS. 3 disordered regions span residues 1445–1661, 1696–1715, and 1735–1758; these read EAPN…ENNL, TTTTISTARAKPGNNDINTI, and KSNKFSGTNDLNFQQATKPDGSNK. Composition is skewed to polar residues over residues 1447–1456 and 1483–1497; these read PNTSTKSSPA and SESTDGLSDALNITP. Residues 1499–1516 show a composition bias toward basic and acidic residues; the sequence is KKGEVSSKAKKGYNYEKR. The span at 1539–1553 shows a compositional bias: polar residues; sequence GRSASYTFSDPSSLE. Residue S1541 is modified to Phosphoserine. Y1544 is modified (phosphotyrosine). The segment covering 1554–1567 has biased composition (basic and acidic residues); that stretch reads DSNRQKPFNGEKFR. Basic residues predominate over residues 1568–1577; sequence RFSSKSRRGS. The span at 1594–1604 shows a compositional bias: polar residues; it reads INNNQTSPQNK. Residues 1605–1621 are compositionally biased toward basic and acidic residues; it reads PSKESLKSDTISNEKKV. Residues 1630-1641 are compositionally biased toward polar residues; the sequence is NLLTPTISNGTR.

It belongs to the formin homology family. BNI1 subfamily. As to quaternary structure, interacts with profilin and actin at the FH1 and FH2 domains respectively.

The protein resides in the nucleus. In terms of biological role, plays a role in the cell cycle. Involved in cytokinesis. Component of the cell division ring. In the absence of profilin, caps the barbed end of actin filaments, thus preventing subunit addition and dissociation. In the presence of profilin, nucleates actin filaments that grow rapidly from their barbed ends. The sequence is that of Cell division control protein 12 (cdc12) from Schizosaccharomyces pombe (strain 972 / ATCC 24843) (Fission yeast).